The primary structure comprises 107 residues: Sulfurtransferase Alvin_2599 (107 aa).

In terms of domain architecture, Rhodanese spans 16–104; it reads DTEDVLLVDI…WARHGLPIVA (89 aa). Cys64 acts as the Cysteine persulfide intermediate in catalysis.

In terms of assembly, monomer.

Its subcellular location is the cytoplasm. It functions in the pathway energy metabolism; sulfur metabolism. Sulfur carrier protein involved in sulfur trafficking for oxidative dissimilatory sulfur metabolism. Component of a sulfur relay system that starts with the sulfur-mobilizing rhodanese-like protein Rhd_2599 (Alvin_2599), which transfers the sulfur from a low-molecular-weight thiol, maybe glutathione, to the TusA protein (Alvin_2600); TusA serves as the sulfur donor for DsrEFH, which persulfurates DsrC; persulfurated DsrC very probably serves as a direct substrate for reverse-acting sulfite reductase, DsrAB. Is able to catalyze the sulfur transfer reaction from thiosulfate or glutathione (GSSH) to cyanide in vitro, however, thiosulfate is unlikely an in vivo substrate. The chain is Sulfurtransferase Alvin_2599 from Allochromatium vinosum (strain ATCC 17899 / DSM 180 / NBRC 103801 / NCIMB 10441 / D) (Chromatium vinosum).